We begin with the raw amino-acid sequence, 141 residues long: Hemoglobin subunit alpha (141 aa).

In terms of domain architecture, Globin spans 1–141 (VLSEADKSNV…VSTVLTSKYR (141 aa)). Histidine 58 provides a ligand contact to O2. Histidine 87 lines the heme b pocket.

It belongs to the globin family. Heterotetramer of two alpha chains and two beta chains. When oxygenated in vitro, exists virtually only in polymeric form. When deoxygenated, forms tetramers, octamers and larger polymers. In terms of tissue distribution, red blood cells.

In terms of biological role, involved in oxygen transport from the lung to the various peripheral tissues. This is Hemoglobin subunit alpha from Paleosuchus palpebrosus (Cuvier's smooth-fronted caiman).